The primary structure comprises 261 residues: Thiamine thiazole synthase (261 aa).

Residues A33, 52-53, G60, V124, and 152-154 contribute to the NAD(+) site; these read ER and HVD. Fe cation is bound by residues D154 and H169. I219 is a binding site for NAD(+). R229 provides a ligand contact to glycine.

Belongs to the THI4 family. As to quaternary structure, homooctamer; tetramer of dimers. Fe(2+) is required as a cofactor.

It carries out the reaction hydrogen sulfide + glycine + NAD(+) = ADP-5-ethyl-4-methylthiazole-2-carboxylate + nicotinamide + 3 H2O + H(+). It participates in cofactor biosynthesis; thiamine diphosphate biosynthesis. Functionally, involved in the biosynthesis of the thiazole moiety of thiamine. Catalyzes the conversion of NAD and glycine to adenosine diphosphate 5-(2-hydroxyethyl)-4-methylthiazole-2-carboxylate (ADT), an adenylated thiazole intermediate, using free sulfide as a source of sulfur. The polypeptide is Thiamine thiazole synthase (Pyrobaculum aerophilum (strain ATCC 51768 / DSM 7523 / JCM 9630 / CIP 104966 / NBRC 100827 / IM2)).